A 490-amino-acid polypeptide reads, in one-letter code: Delta(14)-sterol reductase (490 aa).

7 helical membrane-spanning segments follow: residues 23–43, 80–100, 136–156, 160–180, 230–250, 255–275, and 324–344; these read FGGP…VHVF, VFGL…ALSL, LAIL…WTFI, FAQI…FVYV, EFME…AFIA, LYGY…FYVF, and QLGA…YSIF. Residues K351, R355, I378, W383, and 390–391 each bind NADP(+); that span reads NY. A helical membrane pass occupies residues 436-456; it reads ARGWGIVFTYFYILYFAILLI. Residues D462, 466–470, and Y477 contribute to the NADP(+) site; that span reads CSKKY.

Belongs to the ERG4/ERG24 family.

The protein localises to the membrane. The catalysed reaction is 4,4-dimethyl-5alpha-cholesta-8,24-dien-3beta-ol + NADP(+) = 4,4-dimethyl-5alpha-cholesta-8,14,24-trien-3beta-ol + NADPH + H(+). Its pathway is steroid biosynthesis; zymosterol biosynthesis; zymosterol from lanosterol: step 2/6. Its function is as follows. Reduces the C14=C15 double bond of 4,4-dimethyl-cholesta-8,14,24-trienol to produce 4,4-dimethyl-cholesta-8,24-dienol. The protein is Delta(14)-sterol reductase (erg-3) of Neurospora crassa (strain ATCC 24698 / 74-OR23-1A / CBS 708.71 / DSM 1257 / FGSC 987).